The sequence spans 1005 residues: DNA double-strand break repair Rad50 ATPase (1005 aa).

ATP-binding positions include K14, 35 to 40, 62 to 64, and Q134; these read GSGKSS and ITK. Coiled-coil stretches lie at residues 189–230, 292–321, 346–379, and 404–498; these read KENY…IEKL, LVDEIRKIESRLRELKSHYEDYLKLTKQLE, LDTLLNKIKDEIERVETIKDLLEELKNLNEEIEK, and AVEY…LKEV. Residues 457 to 554 enclose the Zinc-hook domain; sequence IEEKKKVLEN…DIEKLKKEID (98 aa). Residues C502 and C505 each coordinate Zn(2+). Coiled coils occupy residues 523–600, 656–692, and 800–834; these read TQLN…YVIN, KEKCREELNKLREDEREINRLKDKLNELKNKEKELIE, and RQELDNVREQKTEIETGIEYLKKDVESLKARLKEM.

The protein belongs to the SMC family. RAD50 subfamily. In terms of assembly, homodimer. Forms a heterotetramer composed of two Mre11 subunits and two Rad50 subunits. Zn(2+) is required as a cofactor.

Its function is as follows. Part of the Rad50/Mre11 complex, which is involved in the early steps of DNA double-strand break (DSB) repair. The complex may facilitate opening of the processed DNA ends to aid in the recruitment of HerA and NurA. Rad50 controls the balance between DNA end bridging and DNA resection via ATP-dependent structural rearrangements of the Rad50/Mre11 complex. This Methanocaldococcus jannaschii (strain ATCC 43067 / DSM 2661 / JAL-1 / JCM 10045 / NBRC 100440) (Methanococcus jannaschii) protein is DNA double-strand break repair Rad50 ATPase.